Reading from the N-terminus, the 681-residue chain is MRQPLLKLAAVTRRFPAGDKDVVVLNNVNLSIGAGEIVAIVGASGSGKSTLMNILGCLDHPSEGTYTVGGRDTHMLDSDELAQLRREHFGFVFQRYHLLPHVDAVANLEMPAIYAGTPRADRHARARELLARLGLADRAHHRPGQLSGGQQQRVSIARALMNGGQVILADEPTGALDTKSGQDVIRILHELNALGHTIVIVTHDKAVARHARRIIEISDGEIVADRPNRHYAEAFAEVGVGAAATTETAADTRSAPASGDAPPPANNDTAADPAPRARRFAAGTGRFAEACRMAWIALVSHRLRTLLTMLGIIIGITSVVSIVAVGEGAKRYMLEEIGSIGTNTISLYPGSDWGDSRADTIQTLVPADVAALAEQPYVDSATPETSRTLLLRYRNVDVHALVSGVGDSYFQTRGMRFALGVPFDDDAVRRQAQVAVIDQNTRRKLFGATRNPVGEAILVDNVPCVVIGVTADKKSAFGSVKSLNVWVPYTTASGRLFGQRYLDSITVRVRDGQPSAAAEKSLEKLMIQRHGRKDFFTYNMDSVVKTVEKTGQSLTLLLSLIAVISLVVGGIGVMNIMLVSVTERTREIGIRMAVGARQSDILQQFLVEAVLVCLLGGTIGIALSFGLGALFSVFVAQWKMVFSAGAIVTAFVCSTLTGVIFGFMPARNASRLDPIDALARD.

The ABC transporter domain occupies 6-244; sequence LKLAAVTRRF…FAEVGVGAAA (239 aa). 42–49 is a binding site for ATP; it reads GASGSGKS. The tract at residues 246-274 is disordered; sequence TETAADTRSAPASGDAPPPANNDTAADPA. Helical transmembrane passes span 306–326, 554–574, 611–631, and 644–664; these read LLTMLGIIIGITSVVSIVAVG, LTLLLSLIAVISLVVGGIGVM, LVCLLGGTIGIALSFGLGALF, and AGAIVTAFVCSTLTGVIFGFM.

This sequence belongs to the ABC transporter superfamily. Macrolide exporter (TC 3.A.1.122) family. Homodimer.

It localises to the cell inner membrane. Its function is as follows. Non-canonical ABC transporter that contains transmembrane domains (TMD), which form a pore in the inner membrane, and an ATP-binding domain (NBD), which is responsible for energy generation. Confers resistance against macrolides. The protein is Macrolide export ATP-binding/permease protein MacB of Burkholderia cenocepacia (strain HI2424).